A 409-amino-acid polypeptide reads, in one-letter code: Potassium channel subfamily K member 3 (409 aa).

Over 1–8 (MKRQNVRT) the chain is Cytoplasmic. A helical membrane pass occupies residues 9-29 (LALIVCTFTYLLVGAAVFDAL). N-linked (GlcNAc...) asparagine glycosylation is present at Asn53. Positions 78 to 101 (WRFAGSFYFAITVITTIGYGHAAP) form an intramembrane region, pore-forming. Residues 108 to 128 (VFCMFYALLGIPLTLVMFQSL) form a helical membrane-spanning segment. Residues 129–158 (GERINTFVRYLLHRAKRGLGMRHAEVSMAN) are Cytoplasmic-facing. The helical transmembrane segment at 159–179 (MVLIGFVSCISTLCIGAAAFS) threads the bilayer. An intramembrane region (pore-forming) is located at residues 184–207 (WTFFQAYYYCFITLTTIGFGDYVA). Residues 223-243 (FSFVYILTGLTVIGAFLNLVV) form a helical membrane-spanning segment. Topologically, residues 244–409 (LRFMTMNAED…RGLMKRRSSV (166 aa)) are cytoplasmic.

Belongs to the two pore domain potassium channel (TC 1.A.1.8) family. Homodimer. Heterodimer with KCNK1. Heterodimer with KCNK9. As to expression, very strong expression in heart, also detected in kidney, brain, skin, testis, lung, skeletal muscle, small intestine and stomach. Not detected in liver, thymus or spleen. Expressed in adrenal glands mainly in zona glomerulosa and zona fasciculata of the cortex. Expressed at higher levels in brown and beige than in white adipocytes.

The protein resides in the cell membrane. It carries out the reaction K(+)(in) = K(+)(out). The catalysed reaction is Na(+)(in) = Na(+)(out). Its activity is regulated as follows. Activated by halothane and isoflurane. Inhibited by external acidification, diacylglycerol and anandamide. Inactivated by barium. Its function is as follows. K(+) channel that conducts voltage-dependent outward rectifying currents upon membrane depolarization. Voltage sensing is coupled to K(+) electrochemical gradient in an 'ion flux gating' mode where outward but not inward ion flow opens the gate. Changes ion selectivity and becomes permeable to Na(+) ions in response to extracellular acidification. Protonation of the pH sensor His-98 stabilizes C-type inactivation conformation likely converting the channel from outward K(+)-conducting, to inward Na(+)-conducting to nonconductive state. Homo- and heterodimerizes to form functional channels with distinct regulatory and gating properties. Allows K(+) currents with fast-gating kinetics important for the repolarization and hyperpolarization phases of action potentials. In cerebellar granule cells, heteromeric KCNK3:KCNK9 channel may hyperpolarize the resting membrane potential to limit intrinsic neuronal excitability, but once the action potential threshold is reached, it may support high-frequency action potential firing and increased neuronal excitability. Dispensable for central chemosensory respiration i.e. breathing controlled by brainstem CO2/pH, it rather conducts pH-sensitive currents and controls the firing rate of serotonergic raphe neurons involved in potentiation of the respiratory chemoreflex. Additionally, imparts chemosensitivity to type 1 cells in carotid bodies which respond to a decrease in arterial oxygen pressure or an increase in carbon dioxide pressure or pH to initiate adaptive changes in pulmonary ventilation. In adrenal gland, contributes to the maintenance of a hyperpolarized resting membrane potential of aldosterone-producing cells at zona glomerulosa and limits aldosterone release as part of a regulatory mechanism that controls arterial blood pressure and electrolyte homeostasis. In brown adipocytes, mediates K(+) efflux that counteracts norepinephrine-induced membrane depolarization, limits Ca(2+) efflux and downstream cAMP and PKA signaling, ultimately attenuating lipid oxidation and adaptive thermogenesis. The chain is Potassium channel subfamily K member 3 from Mus musculus (Mouse).